A 159-amino-acid polypeptide reads, in one-letter code: MIDPDGFRPNVGIILTNDAGQVLWARRINQDAWQFPQGGINPDETPEDALYRELNEEVGLERDDVEILACTRGWLRYRLPQRLVRTHSQPLCIGQKQKWFLLRLLSNEQRVRMDLTGKPEFDGWRWVSYWYPLGQVVTFKREVYRRALKELAPRLLTRD.

The region spanning 6–149 is the Nudix hydrolase domain; sequence GFRPNVGIIL…KREVYRRALK (144 aa). The short motif at 38–59 is the Nudix box element; sequence GGINPDETPEDALYRELNEEVG.

The protein belongs to the Nudix hydrolase family. RppH subfamily. The cofactor is a divalent metal cation.

Functionally, accelerates the degradation of transcripts by removing pyrophosphate from the 5'-end of triphosphorylated RNA, leading to a more labile monophosphorylated state that can stimulate subsequent ribonuclease cleavage. The sequence is that of RNA pyrophosphohydrolase from Pseudomonas putida (strain ATCC 700007 / DSM 6899 / JCM 31910 / BCRC 17059 / LMG 24140 / F1).